The sequence spans 741 residues: Aspartyl/asparaginyl beta-hydroxylase (741 aa).

Residues Met-1–Arg-54 are disordered. At Met-1–Ser-62 the chain is on the cytoplasmic side. The segment covering Lys-8–Ser-25 has biased composition (gly residues). Ser-15 carries the post-translational modification Phosphoserine. The segment covering Gly-26 to Gly-40 has biased composition (low complexity). A helical; Signal-anchor for type II membrane protein transmembrane segment spans residues Phe-63 to Trp-83. Residues Phe-84 to Ile-741 are Lumenal-facing. Ca(2+) contacts are provided by Asp-100, Asp-102, Asp-104, Asp-106, and Asp-111. 2 disordered regions span residues Glu-120–Glu-141 and Thr-222–Ser-244. Residues Met-231–Asp-242 are compositionally biased toward acidic residues. TPR repeat units follow at residues Ile-324–Ser-357, Ala-365–Pro-398, Thr-437–Asp-470, Phe-472–Gly-504, and Gly-508–Ala-540. The N-linked (GlcNAc...) asparagine glycan is linked to Asn-453. Trp-608 is a 2-oxoglutarate binding site. The cysteines at positions 624 and 631 are disulfide-linked. Position 651 (Ser-651) interacts with 2-oxoglutarate. His-662 serves as a coordination point for Fe cation. Arg-671–His-673 contributes to the 2-oxoglutarate binding site. The N-linked (GlcNAc...) asparagine glycan is linked to Asn-689. His-708 provides a ligand contact to Fe cation. Arg-718 lines the 2-oxoglutarate pocket.

Belongs to the aspartyl/asparaginyl beta-hydroxylase family. As to quaternary structure, monomer. Isoform 2 interacts with CASQ2. It depends on Fe cation as a cofactor. Isoform 1 is detected in heart, liver and ovary (at protein level). Detected in heart ventricle. Isoform 1 is widely expressed. Isoform 2 is detected in heart and skeletal muscle.

It is found in the endoplasmic reticulum membrane. The protein resides in the sarcoplasmic reticulum membrane. The catalysed reaction is L-aspartyl-[protein] + 2-oxoglutarate + O2 = 3-hydroxy-L-aspartyl-[protein] + succinate + CO2. Functionally, specifically hydroxylates an Asp or Asn residue in certain epidermal growth factor-like (EGF) domains of a number of proteins. The polypeptide is Aspartyl/asparaginyl beta-hydroxylase (Asph) (Mus musculus (Mouse)).